Here is a 361-residue protein sequence, read N- to C-terminus: UDP-3-O-acylglucosamine N-acyltransferase (361 aa).

Histidine 253 (proton acceptor) is an active-site residue.

Belongs to the transferase hexapeptide repeat family. LpxD subfamily. In terms of assembly, homotrimer.

The catalysed reaction is a UDP-3-O-[(3R)-3-hydroxyacyl]-alpha-D-glucosamine + a (3R)-hydroxyacyl-[ACP] = a UDP-2-N,3-O-bis[(3R)-3-hydroxyacyl]-alpha-D-glucosamine + holo-[ACP] + H(+). It participates in bacterial outer membrane biogenesis; LPS lipid A biosynthesis. Functionally, catalyzes the N-acylation of UDP-3-O-acylglucosamine using 3-hydroxyacyl-ACP as the acyl donor. Is involved in the biosynthesis of lipid A, a phosphorylated glycolipid that anchors the lipopolysaccharide to the outer membrane of the cell. This chain is UDP-3-O-acylglucosamine N-acyltransferase, found in Burkholderia pseudomallei (strain 1710b).